We begin with the raw amino-acid sequence, 434 residues long: Serine hydroxymethyltransferase (434 aa).

(6S)-5,6,7,8-tetrahydrofolate-binding positions include Leu133 and 137–139 (GHL). Lys242 bears the N6-(pyridoxal phosphate)lysine mark.

The protein belongs to the SHMT family. As to quaternary structure, homodimer. Pyridoxal 5'-phosphate is required as a cofactor.

It is found in the cytoplasm. It catalyses the reaction (6R)-5,10-methylene-5,6,7,8-tetrahydrofolate + glycine + H2O = (6S)-5,6,7,8-tetrahydrofolate + L-serine. The protein operates within one-carbon metabolism; tetrahydrofolate interconversion. It functions in the pathway amino-acid biosynthesis; glycine biosynthesis; glycine from L-serine: step 1/1. Catalyzes the reversible interconversion of serine and glycine with tetrahydrofolate (THF) serving as the one-carbon carrier. This reaction serves as the major source of one-carbon groups required for the biosynthesis of purines, thymidylate, methionine, and other important biomolecules. Also exhibits THF-independent aldolase activity toward beta-hydroxyamino acids, producing glycine and aldehydes, via a retro-aldol mechanism. The chain is Serine hydroxymethyltransferase from Caulobacter sp. (strain K31).